We begin with the raw amino-acid sequence, 437 residues long: 23S rRNA (uracil(1939)-C(5))-methyltransferase RlmD (437 aa).

The region spanning 10 to 68 (SAPRNTTFVAEILDLDYQGRGVAKVQGKTWFIENALPQEKVEVRIVDEKRHYGHGISCK) is the TRAM domain. 4 residues coordinate [4Fe-4S] cluster: C81, C87, C90, and C167. Residues Q270, F299, N304, E320, N347, and D368 each coordinate S-adenosyl-L-methionine. C394 functions as the Nucleophile in the catalytic mechanism.

This sequence belongs to the class I-like SAM-binding methyltransferase superfamily. RNA M5U methyltransferase family. RlmD subfamily.

The catalysed reaction is uridine(1939) in 23S rRNA + S-adenosyl-L-methionine = 5-methyluridine(1939) in 23S rRNA + S-adenosyl-L-homocysteine + H(+). Its function is as follows. Catalyzes the formation of 5-methyl-uridine at position 1939 (m5U1939) in 23S rRNA. This Pasteurella multocida (strain Pm70) protein is 23S rRNA (uracil(1939)-C(5))-methyltransferase RlmD.